A 637-amino-acid polypeptide reads, in one-letter code: Capsid scaffolding protein (637 aa).

Catalysis depends on charge relay system residues histidine 61, serine 129, and histidine 148. Disordered stretches follow at residues 262–326 (PERG…PGDG), 414–479 (LPAA…PHET), and 502–608 (HAPY…EAGA). Over residues 277 to 317 (SPAASVPAPQVAVRARQVASSSSSSSFPAPADMNPVSASGA) the composition is skewed to low complexity. Positions 326 to 345 (GSYLWIPASHYNQLVTGQSA) are interaction with pAP. The Nuclear localization signal motif lies at 428 to 431 (KRRR). 2 stretches are compositionally biased toward basic and acidic residues: residues 432-450 (HEVEQPEYDCGRDEPDRDF) and 457-468 (ARPEPRPVDSRR). Pro residues-rich tracts occupy residues 537–559 (LPPPHIAPPGPPLSGAVPPPSYP) and 566–594 (GPAPPLHQPSPAHAHPPPPPPGPTPPPAA). Over residues 595 to 608 (SLPQPEAPGAEAGA) the composition is skewed to low complexity. Residues 617-637 (HVNVDTARAADLFVSQMMGSR) are interaction with major capsid protein.

This sequence belongs to the herpesviridae capsid scaffolding protein family. In terms of assembly, homomultimer. Interacts with major capsid protein. As to quaternary structure, exists in a monomer-dimer equilibrium with the dimer being the active species. In terms of processing, capsid scaffolding protein is cleaved by assemblin after formation of the spherical procapsid. As a result, the capsid obtains its mature, icosahedral shape. Cleavages occur at two or more sites: release (R-site) and maturation (M-site).

The protein resides in the host cytoplasm. The protein localises to the host nucleus. It catalyses the reaction Cleaves -Ala-|-Ser- and -Ala-|-Ala- bonds in the scaffold protein.. Functionally, acts as a scaffold protein by binding major capsid protein in the cytoplasm, inducing the nuclear localization of both proteins. Multimerizes in the nucleus such as major capsid protein forms the icosahedral T=16 capsid. Autocatalytic cleavage releases the assembly protein, and subsequently abolishes interaction with major capsid protein. Cleavages products are evicted from the capsid before or during DNA packaging. Its function is as follows. Protease that plays an essential role in virion assembly within the nucleus. Catalyzes the cleavage of the assembly protein after formation of the spherical procapsid. By that cleavage, the capsid matures and gains its icosahedral shape. The cleavage sites seem to include -Ala-Ser-, -Ala-Ala-, as well as Ala-Thr bonds. Assemblin and cleavages products are evicted from the capsid before or during DNA packaging. In terms of biological role, plays a major role in capsid assembly. Acts as a scaffold protein by binding major capsid protein. Multimerizes in the nucleus such as major capsid protein forms the icosahedral T=16 capsid. Cleaved by assemblin after capsid completion. The cleavages products are evicted from the capsid before or during DNA packaging. The sequence is that of Capsid scaffolding protein (UL26) from Homo sapiens (Human).